Consider the following 236-residue polypeptide: Phosphoribosylaminoimidazole-succinocarboxamide synthase (236 aa).

This sequence belongs to the SAICAR synthetase family.

It catalyses the reaction 5-amino-1-(5-phospho-D-ribosyl)imidazole-4-carboxylate + L-aspartate + ATP = (2S)-2-[5-amino-1-(5-phospho-beta-D-ribosyl)imidazole-4-carboxamido]succinate + ADP + phosphate + 2 H(+). Its pathway is purine metabolism; IMP biosynthesis via de novo pathway; 5-amino-1-(5-phospho-D-ribosyl)imidazole-4-carboxamide from 5-amino-1-(5-phospho-D-ribosyl)imidazole-4-carboxylate: step 1/2. In Chlorobium phaeobacteroides (strain BS1), this protein is Phosphoribosylaminoimidazole-succinocarboxamide synthase.